A 692-amino-acid chain; its full sequence is Elongation factor G (692 aa).

The 275-residue stretch at 8–282 (EKVRNIGIAA…AVVDYLPAPT (275 aa)) folds into the tr-type G domain. Residues 17 to 24 (AHIDAGKT), 81 to 85 (DTPGH), and 135 to 138 (NKMD) each bind GTP.

The protein belongs to the TRAFAC class translation factor GTPase superfamily. Classic translation factor GTPase family. EF-G/EF-2 subfamily.

It localises to the cytoplasm. Functionally, catalyzes the GTP-dependent ribosomal translocation step during translation elongation. During this step, the ribosome changes from the pre-translocational (PRE) to the post-translocational (POST) state as the newly formed A-site-bound peptidyl-tRNA and P-site-bound deacylated tRNA move to the P and E sites, respectively. Catalyzes the coordinated movement of the two tRNA molecules, the mRNA and conformational changes in the ribosome. This is Elongation factor G from Trichormus variabilis (strain ATCC 29413 / PCC 7937) (Anabaena variabilis).